We begin with the raw amino-acid sequence, 310 residues long: Methionyl-tRNA formyltransferase (310 aa).

109-112 (SLLP) contacts (6S)-5,6,7,8-tetrahydrofolate.

It belongs to the Fmt family.

The catalysed reaction is L-methionyl-tRNA(fMet) + (6R)-10-formyltetrahydrofolate = N-formyl-L-methionyl-tRNA(fMet) + (6S)-5,6,7,8-tetrahydrofolate + H(+). Its function is as follows. Attaches a formyl group to the free amino group of methionyl-tRNA(fMet). The formyl group appears to play a dual role in the initiator identity of N-formylmethionyl-tRNA by promoting its recognition by IF2 and preventing the misappropriation of this tRNA by the elongation apparatus. The polypeptide is Methionyl-tRNA formyltransferase (Alkaliphilus oremlandii (strain OhILAs) (Clostridium oremlandii (strain OhILAs))).